A 689-amino-acid polypeptide reads, in one-letter code: Glycine--tRNA ligase beta subunit (689 aa).

The protein belongs to the class-II aminoacyl-tRNA synthetase family. Tetramer of two alpha and two beta subunits.

Its subcellular location is the cytoplasm. The enzyme catalyses tRNA(Gly) + glycine + ATP = glycyl-tRNA(Gly) + AMP + diphosphate. This chain is Glycine--tRNA ligase beta subunit, found in Salmonella agona (strain SL483).